The following is a 620-amino-acid chain: GTP-binding protein At3g49725, chloroplastic (620 aa).

The transit peptide at 1 to 65 (MSVTTSFGIW…SSFLARDRLR (65 aa)) directs the protein to the chloroplast. The segment at 57–100 (SFLARDRLRSKTPSSSPFSSKRHTPKTSEIEEESTPKDSVLLNP) is disordered. A Hflx-type G domain is found at 346-585 (GTIAVVGYTN…LIDDKMKEKK (240 aa)). Residues 352-359 (GYTNAGKS), 377-381 (FATLD), 399-402 (DTVG), and 468-471 (NKID) each bind GTP. Residues S359 and T379 each contribute to the Mg(2+) site. Acidic residues-rich tracts occupy residues 478-497 (EEEKYLDDGEGVGEEDEDEA) and 511-521 (TVDEDQIQNGD). A disordered region spans residues 478 to 521 (EEEKYLDDGEGVGEEDEDEADLKAEETVDASEATVDEDQIQNGD). GTP is bound at residue 563 to 565 (SAL). Residues 597–620 (LHKRKWRPPRNDDEEERLIPLDQR) form a disordered region.

This sequence belongs to the TRAFAC class OBG-HflX-like GTPase superfamily. HflX GTPase family. Mg(2+) is required as a cofactor.

The protein resides in the plastid. It is found in the chloroplast. The protein is GTP-binding protein At3g49725, chloroplastic of Arabidopsis thaliana (Mouse-ear cress).